A 182-amino-acid chain; its full sequence is Adenine phosphoribosyltransferase (182 aa).

Belongs to the purine/pyrimidine phosphoribosyltransferase family. Homodimer.

It localises to the cytoplasm. The catalysed reaction is AMP + diphosphate = 5-phospho-alpha-D-ribose 1-diphosphate + adenine. Its pathway is purine metabolism; AMP biosynthesis via salvage pathway; AMP from adenine: step 1/1. Functionally, catalyzes a salvage reaction resulting in the formation of AMP, that is energically less costly than de novo synthesis. This Wolinella succinogenes (strain ATCC 29543 / DSM 1740 / CCUG 13145 / JCM 31913 / LMG 7466 / NCTC 11488 / FDC 602W) (Vibrio succinogenes) protein is Adenine phosphoribosyltransferase.